The sequence spans 294 residues: 7,8-dihydropterin-6-methyl-4-(beta-D-ribofuranosyl)-aminobenzene-5'-phosphate synthase (294 aa).

Positions 116, 186, 228, and 265 each coordinate substrate.

The protein belongs to the metallo-beta-lactamase superfamily. Mg(2+) is required as a cofactor.

It carries out the reaction 4-(beta-D-ribofuranosyl)aminobenzene 5'-phosphate + (7,8-dihydropterin-6-yl)methyl diphosphate = N-[(7,8-dihydropterin-6-yl)methyl]-4-(beta-D-ribofuranosyl)aniline 5'-phosphate + diphosphate. It participates in cofactor biosynthesis; 5,6,7,8-tetrahydromethanopterin biosynthesis. Its function is as follows. Catalyzes the condensation of 6-hydroxymethyl-7,8-dihydropterin pyrophosphate (DHPP) with 4-(beta-D-ribofuranosyl)-aminobenzene-5'-phosphate (beta-RFA-P) to form 7,8-dihydropterin-6-methyl-4-(beta-D-ribofuranosyl)-aminobenzene-5'-phosphate, a precursor in the biosynthesis of 5,6,7,8-tetrahydromethanopterin (H4MPT). To a lesser extent, is able to condense beta-RFA-P with another arylamine, 1-(4-aminophenyl)-1-deoxy-D-ribitol (APDR), to form 7,8-dihydropterin-6-methyl-1-(4-aminophenyl)-1-deoxy-D-ribitol. Dephosphorylated beta-RFA-P is not a substrate. The protein is 7,8-dihydropterin-6-methyl-4-(beta-D-ribofuranosyl)-aminobenzene-5'-phosphate synthase of Methanocaldococcus jannaschii (strain ATCC 43067 / DSM 2661 / JAL-1 / JCM 10045 / NBRC 100440) (Methanococcus jannaschii).